The following is a 369-amino-acid chain: Peptide chain release factor 2 (369 aa).

Position 251 is an N5-methylglutamine (Gln251).

It belongs to the prokaryotic/mitochondrial release factor family. Post-translationally, methylated by PrmC. Methylation increases the termination efficiency of RF2.

The protein localises to the cytoplasm. In terms of biological role, peptide chain release factor 2 directs the termination of translation in response to the peptide chain termination codons UGA and UAA. The polypeptide is Peptide chain release factor 2 (prfB) (Thermotoga maritima (strain ATCC 43589 / DSM 3109 / JCM 10099 / NBRC 100826 / MSB8)).